Reading from the N-terminus, the 286-residue chain is Oxidase hkm6 (286 aa).

Residues His16, His25, and His215 each coordinate Cu cation.

Belongs to the tyrosinase family. It depends on Cu(2+) as a cofactor.

It participates in secondary metabolite biosynthesis. Functionally, oxidase; part of the gene cluster that mediates the biosynthesis of hancockiamides, an unusual new family of N-cinnamoylated piperazines. The NRPS hkm10 and the NmrA-like reductase hkm9 are proposed to convert two molecules of L-Phe to the intermediary piperazine called xenocockiamide A. Xenocockiamide A is then converted to hancockiamide D via a series of hydroxylations and O-methylations. The tyrosinase hkm6 may catalyze an aromatic hydroxylation, then the 2-oxoglutarate-dependent Fe(II) dioxygenase hkm4 and the FAD-dependent phenol hydroxylase hkm7 may catalyze consecutive hydroxylations to install 2 more hydroxy groups, and the methyltransferase hkm8 probably catalyzes two methylations using 2 molecules of S-adenosyl-L-methionine (SAM). The NRPS hkm11 activates and transfers trans-cinnamate supplied by the PAL hkm12 to hancockiamide D and produces hancockiamide A. NRPS Hkm11 has the flexibility to tolerate the bulky hancockiamide G as a substrate and the absence of the acetyl-transferase hkm3 opens up the opportunity for hkm11 to introduce a second N-cinnamoyl moiety. The cytochrome P450 monooxygenase hkm5 catalyzes the methylenedioxy bridge formation, converting hancockiamide A into hancockiamide G. Hkm5 can also convert hancockiamide B into hancockiamide C, and hancockiamide D into hancockiamide H. The N-acetyltransferase hkm3 finally transfers an acetyl group to 1-N of piperazine, converting hancockiamide A into hancockiamide B and hancockiamide G into hancockiamide C. The protein is Oxidase hkm6 of Aspergillus hancockii.